We begin with the raw amino-acid sequence, 1038 residues long: SEH-associated protein 4 (1038 aa).

The WD 1 repeat unit spans residues 50-90 (KDFGSITCLDYSESEIGMIGVGEKNGYLRIFNISGQNSSSP). Phosphoserine occurs at positions 123 and 136. WD repeat units lie at residues 147-189 (KKQR…DSHE), 235-276 (QHPT…DQAS), and 544-587 (NTWR…SNQD).

The protein belongs to the WD repeat mio family. Component of the SEA complex composed of at least IML1/SEA1, RTC1/SEA2, MTC5/SEA3, NPR2, NPR3, SEA4, SEC13 and SEH1.

The protein localises to the cytoplasm. It is found in the vacuole membrane. Component of the SEA complex which coats the vacuolar membrane and is involved in intracellular trafficking, autophagy, response to nitrogen starvation, and amino acid biogenesis. In Saccharomyces cerevisiae (strain ATCC 204508 / S288c) (Baker's yeast), this protein is SEH-associated protein 4 (SEA4).